Consider the following 810-residue polypeptide: Plasminogen (810 aa).

Residues 1–19 form the signal peptide; it reads MEHKEVVLLLLLFLKSGQG. The region spanning 20-98 is the PAN domain; it reads EPLDDYVNTK…RDVVLFEKKV (79 aa). Cystine bridges form between Cys49/Cys73, Cys53/Cys61, Cys103/Cys181, Cys124/Cys164, Cys152/Cys176, Cys185/Cys262, Cys188/Cys316, Cys206/Cys245, Cys234/Cys257, Cys275/Cys352, Cys296/Cys335, and Cys324/Cys347. Kringle domains lie at 103 to 181, 184 to 262, and 275 to 352; these read CKTG…IPEC, ECMH…IPRC, and CLKG…IPSC. Residues 125 to 141 are compositionally biased toward polar residues; sequence QKWSSTSPHRPTFSPAT. The interval 125-145 is disordered; it reads QKWSSTSPHRPTFSPATHPSE. L-lysine-binding residues include Thr136, Asp158, and Arg172. A glycan (O-linked (GalNAc...) threonine) is linked at Thr365. 9 disulfides stabilise this stretch: Cys377–Cys454, Cys398–Cys437, Cys426–Cys449, Cys481–Cys560, Cys502–Cys543, Cys531–Cys555, Cys567–Cys685, Cys577–Cys585, and Cys607–Cys623. Kringle domains follow at residues 377-454 and 481-560; these read CYHG…LKKC and CMFG…VPQC. L-lysine-binding residues include Asp432 and Arg445. The region spanning 581-808 is the Peptidase S1 domain; that stretch reads VVGGCVAYPH…FVTWIEGVMR (228 aa). Ser597 carries the post-translational modification Phosphoserine. Residues His622 and Asp665 each act as charge relay system in the active site. Ser688 bears the Phosphoserine mark. Intrachain disulfides connect Cys699–Cys766, Cys729–Cys745, and Cys756–Cys784. Ser760 acts as the Charge relay system in catalysis.

This sequence belongs to the peptidase S1 family. Plasminogen subfamily. As to quaternary structure, interacts with CSPG4 and AMOT. Interacts (via the Kringle domains) with HRG; the interaction tethers PLG to the cell surface and enhances its activation. Interacts (via Kringle 4 domain) with ADA; the interaction stimulates PLG activation when in complex with DPP4. Angiostatin: Interacts with ATP5F1A; the interaction inhibits most of the angiogenic effects of angiostatin. In the presence of the inhibitor, the activation involves only cleavage after Arg-580, yielding two chains held together by two disulfide bonds. In the absence of the inhibitor, the activation involves additionally the removal of the activation peptide.

It is found in the secreted. The enzyme catalyses Preferential cleavage: Lys-|-Xaa &gt; Arg-|-Xaa, higher selectivity than trypsin. Converts fibrin into soluble products.. Its activity is regulated as follows. Converted into plasmin by plasminogen activators, both plasminogen and its activator being bound to fibrin. Activated with catalytic amounts of streptokinase. In terms of biological role, plasmin dissolves the fibrin of blood clots and acts as a proteolytic factor in a variety of other processes including embryonic development, tissue remodeling, tumor invasion, and inflammation. In ovulation, weakens the walls of the Graafian follicle. It activates the urokinase-type plasminogen activator, collagenases and several complement zymogens, such as C1, C4 and C5. Cleavage of fibronectin and laminin leads to cell detachment and apoptosis. Also cleaves fibrin, thrombospondin and von Willebrand factor. Its role in tissue remodeling and tumor invasion may be modulated by CSPG4. Binds to cells. The polypeptide is Plasminogen (PLG) (Macaca mulatta (Rhesus macaque)).